A 420-amino-acid polypeptide reads, in one-letter code: Protein BDLF2 (420 aa).

2 disordered regions span residues 1–21 (MVDEQVAVEHGTVSHTISREE) and 64–129 (AAAV…GGQR). Residues 1 to 184 (MVDEQVAVEH…AETLAEPPRC (184 aa)) are Intravirion-facing. Residues 92-108 (TNTQDQNQNQTTRARTN) show a composition bias toward low complexity. The helical; Signal-anchor for type II membrane protein transmembrane segment at 185-205 (FMLSFVFIYYCCYLAFLALLA) threads the bilayer. At 206–420 (FGFNPLFLPS…LEEVMYVMVQ (215 aa)) the chain is on the virion surface side. Asn-258, Asn-264, Asn-300, Asn-304, Asn-371, and Asn-384 each carry an N-linked (GlcNAc...) asparagine; by host glycan.

This sequence belongs to the herpesviridae BDLF2 family. As to quaternary structure, interacts with BMRF2.

It is found in the virion membrane. In terms of biological role, rearranges cellular actin to increase intercellular contacts and thereby promote virus cell-to-cell spreading. Induce the outgrowth of long, branched plasma membrane fronds to create intercellular network for virion traffic. The fronds are actin based and RhoA-dependent. The sequence is that of Protein BDLF2 from Epstein-Barr virus (strain GD1) (HHV-4).